A 716-amino-acid chain; its full sequence is Fatty acid oxidation complex subunit alpha (716 aa).

The interval 1 to 189 is enoyl-CoA hydratase/isomerase; the sequence is MIYQSPTIQV…KVGAVDAVVA (189 aa). Position 296 (D296) interacts with substrate. The tract at residues 311–716 is 3-hydroxyacyl-CoA dehydrogenase; that stretch reads KEVNNAAVLG…AANNGSYYQA (406 aa). NAD(+)-binding positions include M324, D343, 400-402, K407, and S429; that span reads VVE. H450 acts as the For 3-hydroxyacyl-CoA dehydrogenase activity in catalysis. N453 is a binding site for NAD(+). Substrate contacts are provided by N500 and Y660.

This sequence in the N-terminal section; belongs to the enoyl-CoA hydratase/isomerase family. In the C-terminal section; belongs to the 3-hydroxyacyl-CoA dehydrogenase family. Heterotetramer of two alpha chains (FadB) and two beta chains (FadA).

It carries out the reaction a (3S)-3-hydroxyacyl-CoA + NAD(+) = a 3-oxoacyl-CoA + NADH + H(+). The catalysed reaction is a (3S)-3-hydroxyacyl-CoA = a (2E)-enoyl-CoA + H2O. The enzyme catalyses a 4-saturated-(3S)-3-hydroxyacyl-CoA = a (3E)-enoyl-CoA + H2O. It catalyses the reaction (3S)-3-hydroxybutanoyl-CoA = (3R)-3-hydroxybutanoyl-CoA. It carries out the reaction a (3Z)-enoyl-CoA = a 4-saturated (2E)-enoyl-CoA. The catalysed reaction is a (3E)-enoyl-CoA = a 4-saturated (2E)-enoyl-CoA. It functions in the pathway lipid metabolism; fatty acid beta-oxidation. In terms of biological role, involved in the aerobic and anaerobic degradation of long-chain fatty acids via beta-oxidation cycle. Catalyzes the formation of 3-oxoacyl-CoA from enoyl-CoA via L-3-hydroxyacyl-CoA. It can also use D-3-hydroxyacyl-CoA and cis-3-enoyl-CoA as substrate. The polypeptide is Fatty acid oxidation complex subunit alpha (Shewanella baltica (strain OS155 / ATCC BAA-1091)).